We begin with the raw amino-acid sequence, 74 residues long: Omega-conotoxin-like protein 1 (74 aa).

A signal peptide spans 1-20 (MSKFILLVCILLLTTNIVSA). 3 disulfide bridges follow: cysteine 24–cysteine 38, cysteine 31–cysteine 43, and cysteine 37–cysteine 50.

As to expression, highly expressed in brain. Is also found in hemolymph.

Functionally, the impact of this protein on the neuronal activity of the honeybee brain is not known. It does not affect apparent movement or hatching of blowfly larvae. However, when injected into fish, it induces a strong reversible paralytic effect. In addition, the presence of this small peptide in the hemolymph of adult drones together with its induction after bacterial infection suggests that this peptide exhibits antibacterial activity. This peptide may act by inhibiting ion channels. The chain is Omega-conotoxin-like protein 1 from Apis mellifera (Honeybee).